Reading from the N-terminus, the 65-residue chain is Small ribosomal subunit protein bS21 (65 aa).

This sequence belongs to the bacterial ribosomal protein bS21 family.

This Cytophaga hutchinsonii (strain ATCC 33406 / DSM 1761 / CIP 103989 / NBRC 15051 / NCIMB 9469 / D465) protein is Small ribosomal subunit protein bS21.